Here is a 211-residue protein sequence, read N- to C-terminus: Thiamine-phosphate synthase (211 aa).

4-amino-2-methyl-5-(diphosphooxymethyl)pyrimidine-binding positions include 37–41 and Asn-69; that span reads QLRIK. Mg(2+) contacts are provided by Asp-70 and Asp-89. A 4-amino-2-methyl-5-(diphosphooxymethyl)pyrimidine-binding site is contributed by Ser-108. 134 to 136 is a 2-[(2R,5Z)-2-carboxy-4-methylthiazol-5(2H)-ylidene]ethyl phosphate binding site; sequence TQT. Lys-137 lines the 4-amino-2-methyl-5-(diphosphooxymethyl)pyrimidine pocket. 2-[(2R,5Z)-2-carboxy-4-methylthiazol-5(2H)-ylidene]ethyl phosphate contacts are provided by residues Gly-166 and 186–187; that span reads VS.

This sequence belongs to the thiamine-phosphate synthase family. Mg(2+) is required as a cofactor.

It catalyses the reaction 2-[(2R,5Z)-2-carboxy-4-methylthiazol-5(2H)-ylidene]ethyl phosphate + 4-amino-2-methyl-5-(diphosphooxymethyl)pyrimidine + 2 H(+) = thiamine phosphate + CO2 + diphosphate. It carries out the reaction 2-(2-carboxy-4-methylthiazol-5-yl)ethyl phosphate + 4-amino-2-methyl-5-(diphosphooxymethyl)pyrimidine + 2 H(+) = thiamine phosphate + CO2 + diphosphate. The enzyme catalyses 4-methyl-5-(2-phosphooxyethyl)-thiazole + 4-amino-2-methyl-5-(diphosphooxymethyl)pyrimidine + H(+) = thiamine phosphate + diphosphate. It participates in cofactor biosynthesis; thiamine diphosphate biosynthesis; thiamine phosphate from 4-amino-2-methyl-5-diphosphomethylpyrimidine and 4-methyl-5-(2-phosphoethyl)-thiazole: step 1/1. In terms of biological role, condenses 4-methyl-5-(beta-hydroxyethyl)thiazole monophosphate (THZ-P) and 2-methyl-4-amino-5-hydroxymethyl pyrimidine pyrophosphate (HMP-PP) to form thiamine monophosphate (TMP). This Escherichia coli O9:H4 (strain HS) protein is Thiamine-phosphate synthase.